Reading from the N-terminus, the 110-residue chain is NADH-quinone oxidoreductase subunit K (110 aa).

3 helical membrane passes run 13–33 (LNHY…GLFM), 41–61 (ILMS…AFSI), and 73–93 (IIIL…LLIY).

The protein belongs to the complex I subunit 4L family. As to quaternary structure, NDH-1 is composed of 14 different subunits. Subunits NuoA, H, J, K, L, M, N constitute the membrane sector of the complex.

The protein localises to the cell inner membrane. The catalysed reaction is a quinone + NADH + 5 H(+)(in) = a quinol + NAD(+) + 4 H(+)(out). Functionally, NDH-1 shuttles electrons from NADH, via FMN and iron-sulfur (Fe-S) centers, to quinones in the respiratory chain. The immediate electron acceptor for the enzyme in this species is believed to be ubiquinone. Couples the redox reaction to proton translocation (for every two electrons transferred, four hydrogen ions are translocated across the cytoplasmic membrane), and thus conserves the redox energy in a proton gradient. This is NADH-quinone oxidoreductase subunit K from Rickettsia felis (strain ATCC VR-1525 / URRWXCal2) (Rickettsia azadi).